Here is a 130-residue protein sequence, read N- to C-terminus: Translation initiation factor 5A (130 aa).

At lysine 36 the chain carries Hypusine.

This sequence belongs to the eIF-5A family.

It localises to the cytoplasm. In terms of biological role, functions by promoting the formation of the first peptide bond. The sequence is that of Translation initiation factor 5A (eif5a) from Methanothermobacter thermautotrophicus (strain ATCC 29096 / DSM 1053 / JCM 10044 / NBRC 100330 / Delta H) (Methanobacterium thermoautotrophicum).